Here is a 202-residue protein sequence, read N- to C-terminus: Dephospho-CoA kinase (202 aa).

Positions 6–202 (KISVTGDPSS…QCFKALKGTI (197 aa)) constitute a DPCK domain. Position 14 to 19 (14 to 19 (SSGKTE)) interacts with ATP.

It belongs to the CoaE family.

The protein resides in the cytoplasm. It catalyses the reaction 3'-dephospho-CoA + ATP = ADP + CoA + H(+). It functions in the pathway cofactor biosynthesis; coenzyme A biosynthesis; CoA from (R)-pantothenate: step 5/5. Functionally, catalyzes the phosphorylation of the 3'-hydroxyl group of dephosphocoenzyme A to form coenzyme A. This Chlamydia muridarum (strain MoPn / Nigg) protein is Dephospho-CoA kinase.